The following is a 331-amino-acid chain: DNA-directed RNA polymerase subunit alpha (331 aa).

Positions 1–223 (MDQKRPQLKA…DELTVFGNVE (223 aa)) are alpha N-terminal domain (alpha-NTD). Residues 260 to 331 (PYPADLDTPR…LAQFGLALRD (72 aa)) form an alpha C-terminal domain (alpha-CTD) region.

Belongs to the RNA polymerase alpha chain family. As to quaternary structure, homodimer. The RNAP catalytic core consists of 2 alpha, 1 beta, 1 beta' and 1 omega subunit. When a sigma factor is associated with the core the holoenzyme is formed, which can initiate transcription.

It catalyses the reaction RNA(n) + a ribonucleoside 5'-triphosphate = RNA(n+1) + diphosphate. DNA-dependent RNA polymerase catalyzes the transcription of DNA into RNA using the four ribonucleoside triphosphates as substrates. This Deinococcus geothermalis (strain DSM 11300 / CIP 105573 / AG-3a) protein is DNA-directed RNA polymerase subunit alpha.